The chain runs to 791 residues: Metabotropic glutamate receptor-like protein D (791 aa).

An N-terminal signal peptide occupies residues 1-22 (MKINSFLIILILLFISIKNSNG). The Extracellular portion of the chain corresponds to 23-390 (EPEKKFKLIT…TEVYQSRPIQ (368 aa)). N-linked (GlcNAc...) asparagine glycans are attached at residues Asn72, Asn168, Asn279, Asn290, Asn306, and Asn349. The chain crosses the membrane as a helical span at residues 391–411 (IAISSISSFFIVTVLVMMGLV). Residues 412-424 (VRFRKNPSIRSAS) lie on the Cytoplasmic side of the membrane. A helical transmembrane segment spans residues 425 to 445 (PIFLNFILFGALIIYVGIIIW). The Extracellular segment spans residues 446–453 (SSSINSAS). Residues 454-474 (CNAQFWLVTLGFTTLIGSLVV) traverse the membrane as a helical segment. Topologically, residues 475-495 (KNVRIWLIFDNPELKLVKITN) are cytoplasmic. Residues 496–516 (LQLVPWVGVCLVINIILMSIL) form a helical membrane-spanning segment. At 517 to 550 (TSVGDLREVNAQGIDSLGKYEFMRICKMNSSGAS) the chain is on the extracellular side. Asn545 carries N-linked (GlcNAc...) asparagine glycosylation. A helical transmembrane segment spans residues 551–571 (TLYTILAYFAALLLIGVFVSW). The Cytoplasmic segment spans residues 572-585 (KIRIVDILEFNESK). Residues 586 to 606 (AIANTLYAISFCLFVIVPLMI) traverse the membrane as a helical segment. Over 607 to 615 (SPQDKQSEK) the chain is Extracellular. The chain crosses the membrane as a helical span at residues 616-636 (IILCIAGLFIVTAAVLIIFVP). Residues 637–791 (KFYRVYIFGS…KNEENNDGDN (155 aa)) lie on the Cytoplasmic side of the membrane. 2 disordered regions span residues 664–715 (TARA…SEPN) and 746–791 (IITE…DGDN). Residues 674–689 (SSGGGAGSGGATGGSG) are compositionally biased toward gly residues. Positions 749–760 (ENGQDSNNNNNN) are enriched in low complexity. Residues 752–781 (QDSNNNNNNEENKDNNIENNKISEEIKENL) are a coiled coil. Over residues 761–785 (EENKDNNIENNKISEEIKENLKNEE) the composition is skewed to basic and acidic residues.

In the N-terminal section; belongs to the BMP lipoprotein family. The protein in the C-terminal section; belongs to the G-protein coupled receptor 3 family. GABA-B receptor subfamily.

Its subcellular location is the membrane. The sequence is that of Metabotropic glutamate receptor-like protein D (grlD) from Dictyostelium discoideum (Social amoeba).